Consider the following 284-residue polypeptide: Putative ribosome biogenesis protein C306.07c (284 aa).

A disordered region spans residues 264-284; the sequence is LKKSELRAQKRGSSGEGKGNK.

This sequence belongs to the universal ribosomal protein uL1 family. Highly divergent. Component of the 90S pre-ribosomes.

The protein localises to the nucleus. It is found in the nucleolus. Functionally, involved in rRNA-processing and ribosome biosynthesis. In Schizosaccharomyces pombe (strain 972 / ATCC 24843) (Fission yeast), this protein is Putative ribosome biogenesis protein C306.07c.